Reading from the N-terminus, the 144-residue chain is Intraflagellar transport protein 25 homolog (144 aa).

Ca(2+) is bound by residues N29, D32, and T37.

It belongs to the IFT25 family. As to quaternary structure, component of the IFT complex B, at least composed of IFT20, IFT22, IFT25, IFT27, IFT46, IFT52, TRAF3IP1/IFT54, IFT57, IFT74, IFT80, IFT81, and IFT88. Interacts with IFT27. Interacts with IFT88. As to expression, detected in placenta.

The protein localises to the cell projection. The protein resides in the cilium. Functionally, component of the IFT complex B required for sonic hedgehog/SHH signaling. May mediate transport of SHH components: required for the export of SMO and PTCH1 receptors out of the cilium and the accumulation of GLI2 at the ciliary tip in response to activation of the SHH pathway, suggesting it is involved in the dynamic transport of SHH signaling molecules within the cilium. Not required for ciliary assembly. Its role in intraflagellar transport is mainly seen in tissues rich in ciliated cells such as kidney and testis. Essential for male fertility, spermiogenesis and sperm flagella formation. Plays a role in the early development of the kidney. May be involved in the regulation of ureteric bud initiation. In Homo sapiens (Human), this protein is Intraflagellar transport protein 25 homolog.